Consider the following 403-residue polypeptide: S-adenosylmethionine synthase (403 aa).

H15 lines the ATP pocket. A Mg(2+)-binding site is contributed by D17. E43 contributes to the K(+) binding site. L-methionine is bound by residues E56 and Q99. Positions 99 to 109 (QSPDINQGVDR) are flexible loop. ATP-binding positions include 166–168 (DAK), 232–233 (KF), D241, 247–248 (RK), A264, and K268. D241 serves as a coordination point for L-methionine. K272 contributes to the L-methionine binding site.

It belongs to the AdoMet synthase family. In terms of assembly, homotetramer; dimer of dimers. The cofactor is Mg(2+). Requires K(+) as cofactor.

The protein localises to the cytoplasm. It catalyses the reaction L-methionine + ATP + H2O = S-adenosyl-L-methionine + phosphate + diphosphate. The protein operates within amino-acid biosynthesis; S-adenosyl-L-methionine biosynthesis; S-adenosyl-L-methionine from L-methionine: step 1/1. Catalyzes the formation of S-adenosylmethionine (AdoMet) from methionine and ATP. The overall synthetic reaction is composed of two sequential steps, AdoMet formation and the subsequent tripolyphosphate hydrolysis which occurs prior to release of AdoMet from the enzyme. This is S-adenosylmethionine synthase from Xanthomonas axonopodis pv. citri (strain 306).